Here is a 394-residue protein sequence, read N- to C-terminus: Chalcone synthase 4 (394 aa).

Cys-165 is a catalytic residue.

Belongs to the thiolase-like superfamily. Chalcone/stilbene synthases family.

The catalysed reaction is (E)-4-coumaroyl-CoA + 3 malonyl-CoA + 3 H(+) = 2',4,4',6'-tetrahydroxychalcone + 3 CO2 + 4 CoA. It participates in secondary metabolite biosynthesis; flavonoid biosynthesis. The primary product of this enzyme is 4,2',4',6'-tetrahydroxychalcone (also termed naringenin-chalcone or chalcone) which can under specific conditions spontaneously isomerize into naringenin. The polypeptide is Chalcone synthase 4 (CHS4) (Bromheadia finlaysoniana (Orchid)).